Consider the following 500-residue polypeptide: MAENKYIVGSRDDSDFTTWTAAELAEKIHAREISSQEVTQAHLDRIGEIDGDIHAFLHVGADEALAAASNVDDALAAGDQPTSKLAGVPLALKDVFTTTDAPTTCASKMLEGYMSPYDATVTMRLRAAGIPILGKTNMDEFAMGSSTENSAYGATKNPYDLERTPGGSGGGSSAALAAGMAPLAIGTDTGGSIRQPAALTNTVGVKPTYGTVSRYGLVACASSLDQGGPTARTVLDTALLHEVIAGHDANDSTSSSHAVAPVVEAAKQGASGDLSGVKLGVVKQFEKAEAFQPGVLETYHANLEQLKSQGAELVEVDCPNFDHALNAYYLILPCEVSSNLARFDGMRYGQRRGDDGTRSADQVMSLTRAEGFGPEVKRRIMLGTYALSVGYYDAYYLQAQRVRNLISQDFAKAYEQVDAIVAPVTPSTAFKLGEKVDDPLAMYMFDLFTLPLNLAGVCGMSVPGGFASDSGLPTGLQIMGPAHGDDRLYRVGAAFEAGRS.

Active-site charge relay system residues include Lys93 and Ser168. Ser192 acts as the Acyl-ester intermediate in catalysis.

The protein belongs to the amidase family. GatA subfamily. As to quaternary structure, heterotrimer of A, B and C subunits.

It carries out the reaction L-glutamyl-tRNA(Gln) + L-glutamine + ATP + H2O = L-glutaminyl-tRNA(Gln) + L-glutamate + ADP + phosphate + H(+). Functionally, allows the formation of correctly charged Gln-tRNA(Gln) through the transamidation of misacylated Glu-tRNA(Gln) in organisms which lack glutaminyl-tRNA synthetase. The reaction takes place in the presence of glutamine and ATP through an activated gamma-phospho-Glu-tRNA(Gln). This is Glutamyl-tRNA(Gln) amidotransferase subunit A from Corynebacterium jeikeium (strain K411).